The following is a 297-amino-acid chain: Nucleotide-binding protein DSY4845 (297 aa).

Residue 13-20 (GLSGAGKT) coordinates ATP. 64-67 (DLRG) is a binding site for GTP.

It belongs to the RapZ-like family.

In terms of biological role, displays ATPase and GTPase activities. The protein is Nucleotide-binding protein DSY4845 of Desulfitobacterium hafniense (strain Y51).